A 980-amino-acid chain; its full sequence is Peroxisomal ATPase PEX6 (980 aa).

R119 is modified (omega-N-methylarginine). ATP is bound by residues 470 to 477 (GPPGSGKT) and 744 to 751 (GPPGTGKT).

This sequence belongs to the AAA ATPase family. As to quaternary structure, interacts with PEX1; forming the PEX1-PEX6 AAA ATPase complex, which is composed of a heterohexamer formed by a trimer of PEX1-PEX6 dimers. Interacts with PEX26; interaction is direct and promotes recruitment to peroxisomal membranes. Interacts with ZFAND6.

The protein resides in the cytoplasm. It localises to the cytosol. The protein localises to the peroxisome membrane. Its subcellular location is the cell projection. It is found in the cilium. The protein resides in the photoreceptor outer segment. The catalysed reaction is ATP + H2O = ADP + phosphate + H(+). In terms of biological role, component of the PEX1-PEX6 AAA ATPase complex, a protein dislocase complex that mediates the ATP-dependent extraction of the PEX5 receptor from peroxisomal membranes, an essential step for PEX5 recycling. Specifically recognizes PEX5 monoubiquitinated at 'Cys-11', and pulls it out of the peroxisome lumen through the PEX2-PEX10-PEX12 retrotranslocation channel. Extraction by the PEX1-PEX6 AAA ATPase complex is accompanied by unfolding of the TPR repeats and release of bound cargo from PEX5. This Cricetulus griseus (Chinese hamster) protein is Peroxisomal ATPase PEX6.